We begin with the raw amino-acid sequence, 175 residues long: D-glycero-beta-D-manno-heptose-1,7-bisphosphate 7-phosphatase (175 aa).

D7 serves as the catalytic Nucleophile. Residues D7 and D9 each coordinate Mg(2+). Substrate contacts are provided by residues 7-9 (DRD), 15-19 (DSDAY), and 50-53 (TNQS). D9 acts as the Proton donor in catalysis. Zn(2+) is bound by residues C89, H91, C97, and C99. A substrate-binding site is contributed by 100-101 (RK). Residue D126 coordinates Mg(2+).

The protein belongs to the gmhB family. As to quaternary structure, monomer. Mg(2+) serves as cofactor. Zn(2+) is required as a cofactor.

The protein localises to the cytoplasm. It catalyses the reaction D-glycero-beta-D-manno-heptose 1,7-bisphosphate + H2O = D-glycero-beta-D-manno-heptose 1-phosphate + phosphate. It participates in nucleotide-sugar biosynthesis; ADP-L-glycero-beta-D-manno-heptose biosynthesis; ADP-L-glycero-beta-D-manno-heptose from D-glycero-beta-D-manno-heptose 7-phosphate: step 2/4. Its pathway is bacterial outer membrane biogenesis; LPS core biosynthesis. Functionally, converts the D-glycero-beta-D-manno-heptose 1,7-bisphosphate (beta-HBP) intermediate into D-glycero-beta-D-manno-heptose 1-phosphate by removing the phosphate group at the C-7 position. The chain is D-glycero-beta-D-manno-heptose-1,7-bisphosphate 7-phosphatase from Pseudomonas putida (strain ATCC 47054 / DSM 6125 / CFBP 8728 / NCIMB 11950 / KT2440).